A 225-amino-acid polypeptide reads, in one-letter code: MSCESSMVLGYWDIRGLAHAIRLLLEFTDTSYEEKRYTCGEAPDYDRSQWLDVKFKLDLDFPNLPYLLDGKNKITQSNAILRYIARKHNMCGETEEEKIRVDIIENQVMDFRTQLIRLCYSSDHEKLKPQYLEELPGQLKQFSMFLGKFSWFAGEKLTFVDFLTYDILDQNRIFDPKCLDEFPNLKAFMCRFEALEKIAAYLQSDQFCKMPINNKMAQWGNKPVC.

The GST N-terminal domain maps to 5–92 (SSMVLGYWDI…YIARKHNMCG (88 aa)). Glutathione contacts are provided by residues 11 to 12 (YW), 50 to 54 (WLDVK), and 63 to 64 (NL). Residue Lys-54 forms a Glycyl lysine isopeptide (Lys-Gly) (interchain with G-Cter in SUMO2) linkage. Residue Lys-73 forms a Glycyl lysine isopeptide (Lys-Gly) (interchain with G-Cter in SUMO2) linkage. Position 76–77 (76–77 (QS)) interacts with glutathione. One can recognise a GST C-terminal domain in the interval 94–212 (TEEEKIRVDI…QSDQFCKMPI (119 aa)). Tyr-120 lines the substrate pocket.

This sequence belongs to the GST superfamily. Mu family. In terms of assembly, homodimer. Post-translationally, the N-terminus is blocked. Testis and brain.

The protein resides in the cytoplasm. It carries out the reaction RX + glutathione = an S-substituted glutathione + a halide anion + H(+). Conjugation of reduced glutathione to a wide number of exogenous and endogenous hydrophobic electrophiles. May govern uptake and detoxification of both endogenous compounds and xenobiotics at the testis and brain blood barriers. The chain is Glutathione S-transferase Mu 3 (GSTM3) from Homo sapiens (Human).